Reading from the N-terminus, the 327-residue chain is Zinc transport protein ZntB (327 aa).

Over methionine 1–serine 271 the chain is Cytoplasmic. The helical transmembrane segment at leucine 272 to glycine 292 threads the bilayer. Topologically, residues glycine 293–proline 300 are periplasmic. A helical transmembrane segment spans residues phenylalanine 301–leucine 321. Residues lysine 322 to leucine 327 lie on the Cytoplasmic side of the membrane.

Belongs to the CorA metal ion transporter (MIT) (TC 1.A.35) family.

Its subcellular location is the cell inner membrane. It catalyses the reaction Zn(2+)(out) + H(+)(out) = Zn(2+)(in) + H(+)(in). Zinc transporter. Acts as a Zn(2+):proton symporter, which likely mediates zinc ion uptake. This is Zinc transport protein ZntB from Pectobacterium atrosepticum (strain SCRI 1043 / ATCC BAA-672) (Erwinia carotovora subsp. atroseptica).